The following is a 161-amino-acid chain: ATP synthase subunit b (161 aa).

A helical transmembrane segment spans residues 11–31 (AISFVLFVWFCMKYIWPPIIL).

Belongs to the ATPase B chain family. F-type ATPases have 2 components, F(1) - the catalytic core - and F(0) - the membrane proton channel. F(1) has five subunits: alpha(3), beta(3), gamma(1), delta(1), epsilon(1). F(0) has three main subunits: a(1), b(2) and c(10-14). The alpha and beta chains form an alternating ring which encloses part of the gamma chain. F(1) is attached to F(0) by a central stalk formed by the gamma and epsilon chains, while a peripheral stalk is formed by the delta and b chains.

Its subcellular location is the cell membrane. Its function is as follows. F(1)F(0) ATP synthase produces ATP from ADP in the presence of a proton or sodium gradient. F-type ATPases consist of two structural domains, F(1) containing the extramembraneous catalytic core and F(0) containing the membrane proton channel, linked together by a central stalk and a peripheral stalk. During catalysis, ATP synthesis in the catalytic domain of F(1) is coupled via a rotary mechanism of the central stalk subunits to proton translocation. Component of the F(0) channel, it forms part of the peripheral stalk, linking F(1) to F(0). The polypeptide is ATP synthase subunit b (Buchnera aphidicola subsp. Acyrthosiphon pisum (strain APS) (Acyrthosiphon pisum symbiotic bacterium)).